We begin with the raw amino-acid sequence, 255 residues long: MRHPLVMGNWKLNGSTHMVNELIAALRNELSSVDGCGVAIAPPVMYLDQAKHALAGSRIALGAQNVDVNLSGAFTGEVSADMLKDIGAQYIIIGHSERRTYHKETDAAIAEKFAVLKTAGLIPVLCIGETDAENEAGKTEEVCARQIDAVLKTQGAEAFKGAVIAYEPIWAIGTGKSATPAQAQAVHKFIRDHIAKQDAAVAAEVIIQYGGSVNDKNAAELFTQPDIDGALVGGASLKADAFAVIVKAAAAAKKA.

Substrate is bound at residue 9–11; the sequence is NWK. Catalysis depends on histidine 95, which acts as the Electrophile. Glutamate 167 functions as the Proton acceptor in the catalytic mechanism. Substrate contacts are provided by residues glycine 173, serine 212, and 233 to 234; that span reads GG.

This sequence belongs to the triosephosphate isomerase family. Homodimer.

The protein resides in the cytoplasm. The enzyme catalyses D-glyceraldehyde 3-phosphate = dihydroxyacetone phosphate. The protein operates within carbohydrate biosynthesis; gluconeogenesis. It functions in the pathway carbohydrate degradation; glycolysis; D-glyceraldehyde 3-phosphate from glycerone phosphate: step 1/1. Functionally, involved in the gluconeogenesis. Catalyzes stereospecifically the conversion of dihydroxyacetone phosphate (DHAP) to D-glyceraldehyde-3-phosphate (G3P). This Serratia proteamaculans (strain 568) protein is Triosephosphate isomerase.